Reading from the N-terminus, the 444-residue chain is Chromosome partition protein MukF (444 aa).

The interval 212–240 (LDETSGNLRELQDTLNAAGDKLQAQLLRI) is leucine-zipper.

The protein belongs to the MukF family. Interacts, and probably forms a ternary complex, with MukE and MukB via its C-terminal region. The complex formation is stimulated by calcium or magnesium. It is required for an interaction between MukE and MukB.

The protein localises to the cytoplasm. The protein resides in the nucleoid. Involved in chromosome condensation, segregation and cell cycle progression. May participate in facilitating chromosome segregation by condensation DNA from both sides of a centrally located replisome during cell division. Not required for mini-F plasmid partitioning. Probably acts via its interaction with MukB and MukE. Overexpression results in anucleate cells. It has a calcium binding activity. The sequence is that of Chromosome partition protein MukF from Haemophilus influenzae (strain ATCC 51907 / DSM 11121 / KW20 / Rd).